The primary structure comprises 466 residues: Ribulose bisphosphate carboxylase/oxygenase activase, chloroplastic (466 aa).

A chloroplast-targeting transit peptide spans 1 to 48 (MAAAFSSTVGAPASTPTNFLGKKLKKQVTSAVNYHGKSSNINRFKVMA). 156 to 163 (GGKGQGKS) lines the ATP pocket. The tract at residues 429 to 454 (QGAQQAGNLPVPEGCTDPVAKNFDPT) is disordered.

This sequence belongs to the RuBisCO activase family.

It is found in the plastid. Its subcellular location is the chloroplast stroma. Its function is as follows. Activation of RuBisCO (ribulose-1,5-bisphosphate carboxylase/oxygenase; EC 4.1.1.39) involves the ATP-dependent carboxylation of the epsilon-amino group of lysine leading to a carbamate structure. This Oryza sativa subsp. japonica (Rice) protein is Ribulose bisphosphate carboxylase/oxygenase activase, chloroplastic (RCA).